Consider the following 1954-residue polypeptide: Chromodomain-helicase-DNA-binding protein 5 (1954 aa).

Disordered stretches follow at residues 1 to 134 (MRGP…PKSS) and 225 to 338 (PLAV…GDGY). Acidic residues-rich tracts occupy residues 17–37 (EEMENEDEMSEEEDGGLEAFD) and 72–90 (NDELSENEEDLEEKSESEG). Basic residues predominate over residues 96-115 (NKKKKKKLKDKKEKKAKRKK). Residues 227-237 (AVSPPQVPQPV) are compositionally biased toward pro residues. Over residues 251 to 272 (GVRKKIKGSKDGKKKGKGKKTA) the composition is skewed to basic residues. Positions 291–301 (SEEDEREESDF) are enriched in acidic residues. A compositionally biased stretch (basic residues) spans 321 to 330 (KKSKRRRKKK). 2 consecutive PHD-type zinc fingers follow at residues 343 to 390 (QDYC…CEKE) and 416 to 463 (MEFC…CTCP). A histone-binding region spans residues 343–653 (QDYCEVCQQG…HRELMLGEDT (311 aa)). Positions 497 to 554 (LPPPKPLEGIPEREFFVKWAGLSYWHCSWVKELQLELYHTVMYRNYQRKNDMDEPPPF) constitute a Chromo 1 domain. Residues 549–571 (DEPPPFDYGSGDEDGKSEKRKNK) form a disordered region. A compositionally biased stretch (basic and acidic residues) spans 561–571 (EDGKSEKRKNK). Positions 592-653 (MMIHRILNHS…HRELMLGEDT (62 aa)) constitute a Chromo 2 domain. The Helicase ATP-binding domain maps to 712–896 (RFSWAQGTDT…FHLLNFLTPE (185 aa)). 725 to 732 (DEMGLGKT) is an ATP binding site. Residues 847–850 (DEAH) carry the DEAH box motif. The Helicase C-terminal domain maps to 1028-1193 (LLQKMLKKLR…MTKQELDDIL (166 aa)). Disordered regions lie at residues 1209-1253 (MSQG…EDSS), 1351-1411 (YNDA…LPPL), 1524-1564 (YSTP…APLG), 1597-1640 (AALD…REEV), and 1658-1696 (SRGDSSELRPDDTKAEEKEPIETQQNGDKEEDDEGKKED). 2 stretches are compositionally biased toward acidic residues: residues 1355–1366 (SQEDQEWQDELS) and 1376–1385 (SEDEDEDFEE). Gln-1390 carries the N5-methylglutamine modification. Ser-1554 is modified (phosphoserine). Residues 1554 to 1564 (SPAHLLPAPLG) are compositionally biased toward low complexity. Basic and acidic residues-rich tracts occupy residues 1600-1627 (DRVESEDKHESPASKERAREERPEETEK) and 1658-1678 (SRGDSSELRPDDTKAEEKEPI).

It belongs to the SNF2/RAD54 helicase family. Component of the nucleosome remodeling and deacetylase (NuRD) repressor complex, composed of core proteins MTA1, MTA2, MTA3, RBBP4, RBBP7, HDAC1, HDAC2, MBD2, MBD3, and peripherally associated proteins CDK2AP1, CDK2AP2, GATAD2A, GATAD2B, CHD3, CHD4 and CHD5. The exact stoichiometry of the NuRD complex is unknown, and some subunits such as MBD2 and MBD3, GATAD2A and GATAD2B, and CHD3, CHD4 and CHD5 define mutually exclusive NuRD complexes. Interacts with HDAC2. In terms of processing, methylated at Gln-1390 by N6AMT1. In terms of tissue distribution, preferentially expressed in total brain, fetal brain, and cerebellum. It is also moderately expressed in the adrenal gland and detected in testis.

It is found in the nucleus. The protein localises to the chromosome. The enzyme catalyses ATP + H2O = ADP + phosphate + H(+). In terms of biological role, ATP-dependent chromatin-remodeling factor that binds DNA through histones and regulates gene transcription. May specifically recognize and bind trimethylated 'Lys-27' (H3K27me3) and non-methylated 'Lys-4' of histone H3. Acts as a component of the histone deacetylase NuRD complex which participates in the remodeling of chromatin. Plays a role in the development of the nervous system by activating the expression of genes promoting neuron terminal differentiation. In parallel, it may also positively regulate the trimethylation of histone H3 at 'Lys-27' thereby specifically repressing genes that promote the differentiation into non-neuronal cell lineages. Regulates the expression of genes involved in cell proliferation and differentiation. Downstream activated genes may include CDKN2A that positively regulates the p53/TP53 pathway, which in turn, prevents cell proliferation. In spermatogenesis, it probably regulates histone hyperacetylation and the replacement of histones by transition proteins in chromatin, a crucial step in the condensation of spermatid chromatin and the production of functional spermatozoa. The sequence is that of Chromodomain-helicase-DNA-binding protein 5 from Homo sapiens (Human).